The following is a 34-amino-acid chain: Somatostatin (34 aa).

Residues Ala1 to Lys20 form a disordered region. Cysteines 23 and 34 form a disulfide.

This sequence belongs to the somatostatin family.

The protein resides in the secreted. Its function is as follows. Somatostatin inhibits the release of somatotropin. This chain is Somatostatin (sst), found in Myxine glutinosa (Atlantic hagfish).